A 573-amino-acid chain; its full sequence is MTLTQLLHDKLAAALIAAGVPDAQPLLQPASRPEFGDFQANGVMAAAKQRKMNPRELAQQVIDKLDLAGIASKIEIAGPGFINITLAPDFLAKRLDTVLDDARLGVRSVTEPQRVMVEYSSPNLAKEMHVGHLRSTIIGDTLARVVEFLGNNMVRGNHVGDWGTQFGMLTAYLVETRQAGKADLELSDLETFYRNAKIRFDEDPVFADTARNYVVRLQGGDADVLKLWEQFVDVSLAHCEAVYRKLGVGLTRADVRGESAYNDDLPVIVDELAAKNLLSEDDGAKVVYLDEFRNHDGDPMGVIVQKKDGGFLYTTTDLGAVRYRHKELNLDRVIYVVDARQSQHFQQMFTICRKAGFAPEAMSLEHVGFGTMMGDDGKPFKTRSGGTVKLIELLDEAEERAYALVSEKNPDLPEEEKRKIAHAVGIGAVKYADLSKNRNSDYIFNWDLMLAFEGNTAPYLQYAYTRVASIFRKVDRFDASAPLLITEPAEKQLALMLAQFSDVLNEVARTCFPHLLTQYLYQVATQFMRFYEACPILKSEGATQASRLKLARITADTLKTGLGLLGIEVLESM.

Residues 122–132 (PNLAKEMHVGH) carry the 'HIGH' region motif.

The protein belongs to the class-I aminoacyl-tRNA synthetase family. Monomer.

The protein localises to the cytoplasm. It carries out the reaction tRNA(Arg) + L-arginine + ATP = L-arginyl-tRNA(Arg) + AMP + diphosphate. This Laribacter hongkongensis (strain HLHK9) protein is Arginine--tRNA ligase.